The primary structure comprises 465 residues: MSEAVPLSTRRASSAGDAPGRAPVLDIDSLDMEARGVGRVVDENGEPGKVIFVEGALPGERVTYSSFRRKPTYEQAQVVDILRPSVMRTQPKCAFFGTCGGCSMQHLDMRAQVAIKQRVLEDNLWHLAKLRAEAMFAPIHGPSWGYRYRARLTVRHVAKKGGVLVGFHEKKSSYVADMTSCEVLPPHVSAMLVPLRRLVEQLSIRDRMPQIELAVGARVTALVLRVLEPINAADEALLREFADTHRVQFWLQPKGPDTVAPFYPLDAQLDYTLPEFGIRMPFKPTDFTQVNHQINRVLVGRALRLLAPERGDRVLDLFCGIGNFTLPLARLAREVVGIEGSDALTARALENAKENGVDGHTSFACRNLFEVTADDLRALGAFDKFLVDPPREGALAVSKALAEIAQSGAGPLPARIVYVSCNPSTLARDAGLLVHEAGYRLKGAGVVNMFPHTSHVESIALFERD.

A disordered region spans residues 1–24 (MSEAVPLSTRRASSAGDAPGRAPV). The TRAM domain maps to 16–80 (GDAPGRAPVL…PTYEQAQVVD (65 aa)). Positions 93, 99, 102, and 181 each coordinate [4Fe-4S] cluster. S-adenosyl-L-methionine contacts are provided by Gln-289, Phe-318, Asn-323, Glu-339, Asn-367, and Asp-388. Cys-421 serves as the catalytic Nucleophile.

The protein belongs to the class I-like SAM-binding methyltransferase superfamily. RNA M5U methyltransferase family. RlmD subfamily.

It catalyses the reaction uridine(1939) in 23S rRNA + S-adenosyl-L-methionine = 5-methyluridine(1939) in 23S rRNA + S-adenosyl-L-homocysteine + H(+). Its function is as follows. Catalyzes the formation of 5-methyl-uridine at position 1939 (m5U1939) in 23S rRNA. This is 23S rRNA (uracil(1939)-C(5))-methyltransferase RlmD from Burkholderia mallei (strain ATCC 23344).